The sequence spans 385 residues: 3-hydroxyisobutyryl-CoA hydrolase, mitochondrial (385 aa).

Positions 120, 145, 168, and 176 each coordinate substrate.

It belongs to the enoyl-CoA hydratase/isomerase family.

It is found in the mitochondrion. It carries out the reaction 3-hydroxy-2-methylpropanoyl-CoA + H2O = 3-hydroxy-2-methylpropanoate + CoA + H(+). Its pathway is amino-acid degradation; L-valine degradation. Its function is as follows. Hydrolyzes 3-hydroxyisobutyryl-CoA (HIBYL-CoA), a saline catabolite. Has high activity toward isobutyryl-CoA. Could be an isobutyryl-CoA dehydrogenase that functions in valine catabolism. Also hydrolyzes 3-hydroxypropanoyl-CoA. This Gallus gallus (Chicken) protein is 3-hydroxyisobutyryl-CoA hydrolase, mitochondrial (HIBCH).